We begin with the raw amino-acid sequence, 110 residues long: MSADYPTFKEALEKFKNLESDTAGKDKFNWVFTLENIKSAADVNLASKGLVQLYALQEIDKKINNLTTQVSKLPTTSGSSSAGAIVPAGSNTQGQYKAPPKKGIKRKYPA.

The span at 72–82 shows a compositional bias: polar residues; sequence KLPTTSGSSSA. The tract at residues 72–110 is disordered; it reads KLPTTSGSSSAGAIVPAGSNTQGQYKAPPKKGIKRKYPA. Over residues 99–110 the composition is skewed to basic residues; sequence PPKKGIKRKYPA.

This is Protein P2 from Oryza sativa (Rice).